The primary structure comprises 72 residues: MMKKFTCFLLCATILCAIFCVSVAEKFHKMKSDIERDETPMECVENGGFCPDPEKMGDWCCGRCIRNECRNG.

Residues 1–24 (MMKKFTCFLLCATILCAIFCVSVA) form the signal peptide. The propeptide occupies 25 to 41 (EKFHKMKSDIERDETPM). Disulfide bonds link cysteine 43/cysteine 61, cysteine 50/cysteine 64, and cysteine 60/cysteine 69.

Expressed by the venom gland.

It is found in the secreted. This Hexophthalma dolichocephala (Afrotropical spider) protein is U1-sicaritoxin-Sdo1a.